A 267-amino-acid chain; its full sequence is Acetyl-coenzyme A carboxylase carboxyl transferase subunit beta 1 (267 aa).

Positions 9–267 (TWQACPKCGR…NYGIGRSAHG (259 aa)) constitute a CoA carboxyltransferase N-terminal domain. Zn(2+) contacts are provided by Cys13, Cys16, Cys31, and Cys34. Residues 13–34 (CPKCGRHVHQRQWGTYQQCPYC) form a C4-type zinc finger.

It belongs to the AccD/PCCB family. In terms of assembly, acetyl-CoA carboxylase is a heterohexamer composed of biotin carboxyl carrier protein (AccB), biotin carboxylase (AccC) and two subunits each of ACCase subunit alpha (AccA) and ACCase subunit beta (AccD). Requires Zn(2+) as cofactor.

It localises to the cytoplasm. It carries out the reaction N(6)-carboxybiotinyl-L-lysyl-[protein] + acetyl-CoA = N(6)-biotinyl-L-lysyl-[protein] + malonyl-CoA. It participates in lipid metabolism; malonyl-CoA biosynthesis; malonyl-CoA from acetyl-CoA: step 1/1. Component of the acetyl coenzyme A carboxylase (ACC) complex. Biotin carboxylase (BC) catalyzes the carboxylation of biotin on its carrier protein (BCCP) and then the CO(2) group is transferred by the transcarboxylase to acetyl-CoA to form malonyl-CoA. In Lactiplantibacillus plantarum (strain JDM1) (Lactobacillus plantarum), this protein is Acetyl-coenzyme A carboxylase carboxyl transferase subunit beta 1.